A 276-amino-acid polypeptide reads, in one-letter code: Phosphatidylglycerol--prolipoprotein diacylglyceryl transferase (276 aa).

3 helical membrane passes run 17–37, 63–83, and 95–115; these read LAIH…FFLA, ILFL…CLFY, and ILAV…VLAS. R146 contacts a 1,2-diacyl-sn-glycero-3-phospho-(1'-sn-glycerol). The next 3 membrane-spanning stretches (helical) occupy residues 182-202, 209-229, and 235-255; these read SQVY…WLYA, GQVS…AEYF, and FLGI…PMIV.

This sequence belongs to the Lgt family.

It is found in the cell inner membrane. The catalysed reaction is L-cysteinyl-[prolipoprotein] + a 1,2-diacyl-sn-glycero-3-phospho-(1'-sn-glycerol) = an S-1,2-diacyl-sn-glyceryl-L-cysteinyl-[prolipoprotein] + sn-glycerol 1-phosphate + H(+). It functions in the pathway protein modification; lipoprotein biosynthesis (diacylglyceryl transfer). Functionally, catalyzes the transfer of the diacylglyceryl group from phosphatidylglycerol to the sulfhydryl group of the N-terminal cysteine of a prolipoprotein, the first step in the formation of mature lipoproteins. The sequence is that of Phosphatidylglycerol--prolipoprotein diacylglyceryl transferase from Polaromonas sp. (strain JS666 / ATCC BAA-500).